Consider the following 161-residue polypeptide: Small ribosomal subunit protein uS9 (161 aa).

Disordered regions lie at residues 1-28 and 142-161; these read MAQISDSLDVAPESFSTETPNEEAPKAP and KERKKAGLKKARKAPQFSKR.

This sequence belongs to the universal ribosomal protein uS9 family.

The sequence is that of Small ribosomal subunit protein uS9 from Clavibacter sepedonicus (Clavibacter michiganensis subsp. sepedonicus).